The following is a 200-amino-acid chain: Max dimerization protein 3 (200 aa).

Disordered regions lie at residues 26–56 (EHGYASILPCDPATPGRRKRQRTNSNPDNVR) and 134–164 (LLPPNTERIRTDSLDSSTLSSERSDSDQEDL). The region spanning 54–106 (NVRSVHNELEKHRRAQLRRCLEQLKQQVPLSMENSRHTTLSLLHRAKQHIKKL) is the bHLH domain.

As to quaternary structure, efficient DNA binding requires dimerization with another bHLH protein. Binds DNA as a heterodimer with MAX.

The protein resides in the nucleus. Functionally, transcriptional repressor. Binds with MAX to form a sequence-specific DNA-binding protein complex which recognizes the core sequence 5'-CAC[GA]TG-3'. The sequence is that of Max dimerization protein 3 (mxd3) from Xenopus tropicalis (Western clawed frog).